The chain runs to 174 residues: Chromophore lyase CpcS/CpeS 1 (174 aa).

Belongs to the CpcS/CpeS biliprotein lyase family.

In terms of biological role, covalently attaches a chromophore to Cys residue(s) of phycobiliproteins. The protein is Chromophore lyase CpcS/CpeS 1 of Trichodesmium erythraeum (strain IMS101).